Consider the following 101-residue polypeptide: NAD(P)H-quinone oxidoreductase subunit 4L, chloroplastic (101 aa).

3 helical membrane-spanning segments follow: residues 2–22 (MLEH…YGLI), 32–52 (MCLE…SDFF), and 61–81 (ILSI…LAIV).

Belongs to the complex I subunit 4L family. As to quaternary structure, NDH is composed of at least 16 different subunits, 5 of which are encoded in the nucleus.

Its subcellular location is the plastid. The protein resides in the chloroplast thylakoid membrane. The catalysed reaction is a plastoquinone + NADH + (n+1) H(+)(in) = a plastoquinol + NAD(+) + n H(+)(out). It catalyses the reaction a plastoquinone + NADPH + (n+1) H(+)(in) = a plastoquinol + NADP(+) + n H(+)(out). Its function is as follows. NDH shuttles electrons from NAD(P)H:plastoquinone, via FMN and iron-sulfur (Fe-S) centers, to quinones in the photosynthetic chain and possibly in a chloroplast respiratory chain. The immediate electron acceptor for the enzyme in this species is believed to be plastoquinone. Couples the redox reaction to proton translocation, and thus conserves the redox energy in a proton gradient. This chain is NAD(P)H-quinone oxidoreductase subunit 4L, chloroplastic, found in Buxus microphylla (Littleleaf boxwood).